The sequence spans 365 residues: Glutamate 5-kinase 1 (365 aa).

An ATP-binding site is contributed by K9. Substrate is bound by residues S49, D136, and N148. ATP is bound by residues 168 to 169 (TD) and 210 to 216 (TGGMKSK). In terms of domain architecture, PUA spans 276–353 (SGEIIIDAGA…DELDFEKTFE (78 aa)).

The protein belongs to the glutamate 5-kinase family.

Its subcellular location is the cytoplasm. The enzyme catalyses L-glutamate + ATP = L-glutamyl 5-phosphate + ADP. Its pathway is amino-acid biosynthesis; L-proline biosynthesis; L-glutamate 5-semialdehyde from L-glutamate: step 1/2. Catalyzes the transfer of a phosphate group to glutamate to form L-glutamate 5-phosphate. This chain is Glutamate 5-kinase 1, found in Bacillus subtilis (strain 168).